The sequence spans 92 residues: Small ribosomal subunit protein bS21 (92 aa).

The disordered stretch occupies residues 37 to 92 (QREGTFREMKRRNHYEKPSEKKARQKAEAIRRARKLARKRAQREGLIAKRGGTTRR). The segment covering 51 to 67 (YEKPSEKKARQKAEAIR) has biased composition (basic and acidic residues). Over residues 68 to 77 (RARKLARKRA) the composition is skewed to basic residues.

It belongs to the bacterial ribosomal protein bS21 family.

This is Small ribosomal subunit protein bS21 from Maricaulis maris (strain MCS10) (Caulobacter maris).